The following is a 176-amino-acid chain: Large ribosomal subunit protein uL6 (176 aa).

It belongs to the universal ribosomal protein uL6 family. In terms of assembly, part of the 50S ribosomal subunit.

Its function is as follows. This protein binds to the 23S rRNA, and is important in its secondary structure. It is located near the subunit interface in the base of the L7/L12 stalk, and near the tRNA binding site of the peptidyltransferase center. The polypeptide is Large ribosomal subunit protein uL6 (Burkholderia mallei (strain NCTC 10247)).